A 99-amino-acid polypeptide reads, in one-letter code: A-type ATP synthase subunit F (99 aa).

It belongs to the V-ATPase F subunit family. In terms of assembly, has multiple subunits with at least A(3), B(3), C, D, E, F, H, I and proteolipid K(x).

The protein resides in the cell membrane. Functionally, component of the A-type ATP synthase that produces ATP from ADP in the presence of a proton gradient across the membrane. The polypeptide is A-type ATP synthase subunit F (Methanococcus aeolicus (strain ATCC BAA-1280 / DSM 17508 / OCM 812 / Nankai-3)).